A 125-amino-acid polypeptide reads, in one-letter code: S-adenosylmethionine decarboxylase proenzyme (125 aa).

S71 acts as the Schiff-base intermediate with substrate; via pyruvic acid in catalysis. S71 bears the Pyruvic acid (Ser); by autocatalysis mark. H76 functions as the Proton acceptor; for processing activity in the catalytic mechanism. The active-site Proton donor; for catalytic activity is C91.

This sequence belongs to the prokaryotic AdoMetDC family. Type 1 subfamily. As to quaternary structure, heterotetramer of two alpha and two beta chains arranged as a dimer of alpha/beta heterodimers. It depends on pyruvate as a cofactor. Post-translationally, is synthesized initially as an inactive proenzyme. Formation of the active enzyme involves a self-maturation process in which the active site pyruvoyl group is generated from an internal serine residue via an autocatalytic post-translational modification. Two non-identical subunits are generated from the proenzyme in this reaction, and the pyruvate is formed at the N-terminus of the alpha chain, which is derived from the carboxyl end of the proenzyme. The post-translation cleavage follows an unusual pathway, termed non-hydrolytic serinolysis, in which the side chain hydroxyl group of the serine supplies its oxygen atom to form the C-terminus of the beta chain, while the remainder of the serine residue undergoes an oxidative deamination to produce ammonia and the pyruvoyl group blocking the N-terminus of the alpha chain.

It catalyses the reaction S-adenosyl-L-methionine + H(+) = S-adenosyl 3-(methylsulfanyl)propylamine + CO2. The protein operates within amine and polyamine biosynthesis; S-adenosylmethioninamine biosynthesis; S-adenosylmethioninamine from S-adenosyl-L-methionine: step 1/1. Catalyzes the decarboxylation of S-adenosylmethionine to S-adenosylmethioninamine (dcAdoMet), the propylamine donor required for the synthesis of the polyamines spermine and spermidine from the diamine putrescine. The sequence is that of S-adenosylmethionine decarboxylase proenzyme from Pyrobaculum arsenaticum (strain DSM 13514 / JCM 11321 / PZ6).